A 130-amino-acid chain; its full sequence is Histone H2A type 4 (130 aa).

Phosphoserine; by RPS6KA5 is present on serine 2. At arginine 4 the chain carries Citrulline; alternate. Arginine 4 is subject to Symmetric dimethylarginine; by PRMT5; alternate. Lysine 6 and lysine 10 each carry N6-(2-hydroxyisobutyryl)lysine; alternate. N6-acetyllysine; alternate occurs at positions 6 and 10. Residue lysine 10 is modified to N6-lactoyllysine; alternate. N6-(2-hydroxyisobutyryl)lysine is present on residues lysine 75, lysine 76, and lysine 96. Lysine 96 is modified (N6-glutaryllysine; alternate). Residue glutamine 105 is modified to N5-methylglutamine. N6-(2-hydroxyisobutyryl)lysine; alternate is present on lysine 119. 2 positions are modified to N6-glutaryllysine; alternate: lysine 119 and lysine 120. Lysine 119 carries the post-translational modification N6-crotonyllysine; alternate. Lysine 120 carries the N6-crotonyllysine modification. Threonine 121 is subject to Phosphothreonine; by DCAF1. Lysine 126 carries the post-translational modification N6-glutaryllysine; alternate. Position 126 is an N6-crotonyllysine; alternate (lysine 126). The [ST]-Q motif signature appears at 127–128 (SQ).

Belongs to the histone H2A family. In terms of assembly, the nucleosome is a histone octamer containing two molecules each of H2A, H2B, H3 and H4 assembled in one H3-H4 heterotetramer and two H2A-H2B heterodimers. The octamer wraps approximately 147 bp of DNA. Post-translationally, deiminated on Arg-4 in granulocytes upon calcium entry. Monoubiquitination of Lys-120 (H2AK119Ub) by RING1, TRIM37 and RNF2/RING2 complex gives a specific tag for epigenetic transcriptional repression and participates in X chromosome inactivation of female mammals. It is involved in the initiation of both imprinted and random X inactivation. Ubiquitinated H2A is enriched in inactive X chromosome chromatin. Ubiquitination of H2A functions downstream of methylation of 'Lys-27' of histone H3 (H3K27me). H2AK119Ub by RNF2/RING2 can also be induced by ultraviolet and may be involved in DNA repair. Following DNA double-strand breaks (DSBs), it is ubiquitinated through 'Lys-63' linkage of ubiquitin moieties by the E2 ligase UBE2N and the E3 ligases RNF8 and RNF168, leading to the recruitment of repair proteins to sites of DNA damage. Ubiquitination at Lys-14 and Lys-16 (H2AK13Ub and H2AK15Ub, respectively) in response to DNA damage is initiated by RNF168 that mediates monoubiquitination at these 2 sites, and 'Lys-63'-linked ubiquitin are then conjugated to monoubiquitin; RNF8 is able to extend 'Lys-63'-linked ubiquitin chains in vitro. H2AK119Ub and ionizing radiation-induced 'Lys-63'-linked ubiquitination (H2AK13Ub and H2AK15Ub) are distinct events. In terms of processing, phosphorylation on Ser-2 (H2AS1ph) is enhanced during mitosis. Phosphorylation on Ser-2 by RPS6KA5/MSK1 directly represses transcription. Acetylation of H3 inhibits Ser-2 phosphorylation by RPS6KA5/MSK1. Phosphorylation at Thr-121 (H2AT120ph) by DCAF1 is present in the regulatory region of many tumor suppresor genes and down-regulates their transcription. Post-translationally, symmetric dimethylation on Arg-4 by the PRDM1/PRMT5 complex may play a crucial role in the germ-cell lineage. Glutamine methylation at Gln-105 (H2AQ104me) by FBL is specifically dedicated to polymerase I. It is present at 35S ribosomal DNA locus and impairs binding of the FACT complex. In terms of processing, crotonylation (Kcr) is specifically present in male germ cells and marks testis-specific genes in post-meiotic cells, including X-linked genes that escape sex chromosome inactivation in haploid cells. Crotonylation marks active promoters and enhancers and confers resistance to transcriptional repressors. It is also associated with post-meiotically activated genes on autosomes. Post-translationally, lactylated in macrophages by EP300/P300 by using lactoyl-CoA directly derived from endogenous or exogenous lactate, leading to stimulates gene transcription. Testis.

It is found in the nucleus. The protein localises to the chromosome. Its function is as follows. Core component of nucleosome. Nucleosomes wrap and compact DNA into chromatin, limiting DNA accessibility to the cellular machineries which require DNA as a template. Histones thereby play a central role in transcription regulation, DNA repair, DNA replication and chromosomal stability. DNA accessibility is regulated via a complex set of post-translational modifications of histones, also called histone code, and nucleosome remodeling. The protein is Histone H2A type 4 of Rattus norvegicus (Rat).